A 216-amino-acid chain; its full sequence is Inactive ribonuclease-like protein 10 (216 aa).

Positions 1-26 (MKLNLVQIFFMLLMLLLGLGMGLGLG) are cleaved as a signal peptide. Residues 43-65 (EFWSSDSQDKAEATEEGDGTQTT) form a disordered region.

It belongs to the pancreatic ribonuclease family. The N-terminus is blocked. Glycosylated.

It is found in the secreted. Functionally, secreted proximal epididymal protein required for post-testicular sperm maturation and male fertility. May be involved in sperm adhesion to the egg zona pellucida. Does not have ribonuclease activity. This is Inactive ribonuclease-like protein 10 (RNASE10) from Homo sapiens (Human).